Consider the following 232-residue polypeptide: GTP cyclohydrolase III (232 aa).

It belongs to the archaeal-type GTP cyclohydrolase family.

The catalysed reaction is GTP + 3 H2O = 2-amino-5-formylamino-6-(5-phospho-D-ribosylamino)pyrimidin-4(3H)-one + 2 phosphate + 2 H(+). Catalyzes the formation of 2-amino-5-formylamino-6-ribofuranosylamino-4(3H)-pyrimidinone ribonucleotide monophosphate and inorganic phosphate from GTP. Also has an independent pyrophosphate phosphohydrolase activity. This chain is GTP cyclohydrolase III, found in Saccharolobus islandicus (strain Y.G.57.14 / Yellowstone #1) (Sulfolobus islandicus).